Here is a 497-residue protein sequence, read N- to C-terminus: Ankyrin repeat domain-containing protein 53 (497 aa).

The span at 1–10 (MRRPSRRRSK) shows a compositional bias: basic residues. Residues 1–65 (MRRPSRRRSK…VSSPNSESSQ (65 aa)) form a disordered region. Positions 12-27 (STPPRSHTTPRRTGPS) are enriched in low complexity. Over residues 28–39 (DSRRRPGTKEQP) the composition is skewed to basic and acidic residues. 3 ANK repeats span residues 110–140 (KGFT…PVDL), 144–177 (KGQT…AINS), and 181–210 (NGST…NVHA). Residues 239–264 (WKHDKKVLAQEMEKLRTLKEKLTILE) are a coiled coil.

In terms of assembly, interacts with PSRC1; recruited by PSRC1 to the spindle during mitosis. In terms of processing, phosphorylated during mitosis.

The protein resides in the cytoplasm. Its subcellular location is the cytoskeleton. It is found in the spindle. The protein localises to the spindle pole. Its function is as follows. Required for normal progression through mitosis. Involved in chromosome alignment and cytokinesis via regulation of microtubules polymerization. In Mus musculus (Mouse), this protein is Ankyrin repeat domain-containing protein 53 (Ankrd53).